A 331-amino-acid chain; its full sequence is Centriolar satellite-associated tubulin polyglutamylase complex regulator 1 (331 aa).

The segment at 1–111 is required for interaction with PCM1; sequence MLSPERLALP…HCLLQLLCPD (111 aa). Residues 1-225 form a required for interaction with TPGS1, LRRC49, and TTLL1 region; sequence MLSPERLALP…SCPPPALVKE (225 aa). The segment at 112-331 is required for interaction with TPGS2; sequence FPLELTQKAA…STEETDESET (220 aa). The tract at residues 292-331 is disordered; sequence SCLPSRTPPRVGSPWKPLHRSRKLDAESDGSTEETDESET. Over residues 318–331 the composition is skewed to acidic residues; sequence ESDGSTEETDESET. Ser319 carries the post-translational modification Phosphoserine.

This sequence belongs to the CSTPP1 family. Interacts with PCM1. Interacts with TTLL1, TPGS1, TPGS2 and LRRC49; the interactions link CSTPP1 to the complex TPGC. Binds to alpha-tubulin.

It is found in the cytoplasm. The protein resides in the cytoskeleton. It localises to the microtubule organizing center. Its subcellular location is the centrosome. The protein localises to the centriolar satellite. Regulator of the tubulin polyglutamylase complex (TPGC) that controls cytoskeletal organization, nuclear shape, and cilium disassembly by balancing microtubule and actin assembly. Regulates the assembly and stability of the TPGC and thereby modulates polyglutamylation of the microtubule, which antagonizes MAP4 binding. In Mus musculus (Mouse), this protein is Centriolar satellite-associated tubulin polyglutamylase complex regulator 1.